We begin with the raw amino-acid sequence, 891 residues long: DNA mismatch repair protein MutS (891 aa).

646–653 (GPNMAGKS) lines the ATP pocket.

Belongs to the DNA mismatch repair MutS family.

Functionally, this protein is involved in the repair of mismatches in DNA. It is possible that it carries out the mismatch recognition step. This protein has a weak ATPase activity. This chain is DNA mismatch repair protein MutS, found in Rickettsia canadensis (strain McKiel).